The chain runs to 636 residues: MAQSTATSPDGGTTFEHLWSSLEPDSTYFDLPQSSRGNNEVVGGTDSSMDVFHLEGMTTSVMAQFNLLSSTMDQMSSRAASASPYTPEHAASVPTHSPYAQPSSTFDTMSPAPVIPSNTDYPGPHHFEVTFQQSSTAKSATWTYSPLLKKLYCQIAKTCPIQIKVSTPPPPGTAIRAMPVYKKAEHVTDVVKRCPNHELGRDFNEGQSAPASHLIRVEGNNLSQYVDDPVTGRQSVVVPYEPPQVGTEFTTILYNFMCNSSCVGGMNRRPILIIITLEMRDGQVLGRRSFEGRICACPGRDRKADEDHYREQQALNESSAKNGAASKRAFKQSPPAVPALGAGVKKRRHGDEDTYYLQVRGRENFEILMKLKESLELMELVPQPLVDSYRQQQQLLQRPSHLQPPSYGPVLSPMNKVHGGMNKLPSVNQLVGQPPPHSSAATPNLGPVGPGMLNNHGHAVPANGEMSSSHSAQSMVSGSHCTPPPPYHADPSLVSFLTGLGCPNCIEYFTSQGLQSIYHLQNLTIEDLGALKIPEQYRMTIWRGLQDLKQGHDYSTAQQLLRSSNAATISIGGSGELQRQRVMEAVHFRVRHTITIPNRGGPGGGPDEWADFGFDLPDCKARKQPIKEEFTEAEIH.

The interval Met-1–Asp-46 is transactivation. Thr-27 bears the Phosphothreonine; by PLK1 mark. Position 28 is a phosphotyrosine; by SRC and HCK (Tyr-28). The interval Arg-78–Ser-104 is disordered. Residues Pro-94–Ser-104 are compositionally biased toward polar residues. Tyr-99 bears the Phosphotyrosine; by ABL1 mark. A DNA-binding region spans residues Phe-131–Arg-310. Residues Cys-194, His-197, Cys-258, and Cys-262 each coordinate Zn(2+). Residues Ala-314–Lys-345 are disordered. The interaction with HIPK2 stretch occupies residues Lys-345 to Leu-380. The segment at Lys-345 to Val-386 is oligomerization. The short motif at Pro-483 to Tyr-487 is the PPxY motif element. The 67-residue stretch at Pro-485–Gly-551 folds into the SAM domain. Residue Lys-627 forms a Glycyl lysine isopeptide (Lys-Gly) (interchain with G-Cter in SUMO); in isoform Alpha linkage. Lys-627 participates in a covalent cross-link: Glycyl lysine isopeptide (Lys-Gly) (interchain with G-Cter in SUMO2).

It belongs to the p53 family. Found in a complex with p53/TP53 and CABLES1. The C-terminal oligomerization domain binds to the ABL1 tyrosine kinase SH3 domain. Interacts with HECW2. Isoform Beta interacts homotypically and with p53/TP53, whereas isoform Alpha does not. Isoform Gamma interacts homotypically and with all p73 isoforms. Isoform Delta interacts with isoform Gamma, isoform Alpha, and homotypically. Isoforms Alpha and Beta interact with HIPK2. Isoform Alpha interacts with RANBP9. Isoform Beta interacts with WWOX. Interacts (via SAM domain) with FBXO45 (via B30.2/SPRY domain). Interacts with YAP1 (phosphorylated form). Interacts with HCK (via SH3 domain); this inhibits TP73 activity and degradation. Interacts (via SAM domain) with NQO1; this interaction is NADH-dependent, stabilizes TP73 in response to oxidative stress and protects it from ubiquitin-independent degradation by the 20S proteasome. In terms of assembly, (Microbial infection) Interacts with Epstein-Barr virus protein EBNA6; this interaction inhibits TP73-mediated apoptotic pathway. Zn(2+) serves as cofactor. In terms of processing, isoform alpha (but not isoform beta) is sumoylated on Lys-627, which potentiates proteasomal degradation but does not affect transcriptional activity. Phosphorylation by PLK1 and PLK3 inhibits the transcription regulator activity and pro-apoptotic function. Higher levels of phosphorylation seen in the brain from patients with Huntington disease. Post-translationally, polyubiquitinated by RCHY1/PIRH2; leading to its degradation by the proteasome. As to expression, expressed in striatal neurons of patients with Huntington disease (at protein level). Brain, kidney, placenta, colon, heart, liver, spleen, skeletal muscle, prostate, thymus and pancreas. Highly expressed in fetal tissue. Expressed in the respiratory epithelium.

The protein localises to the nucleus. It is found in the cytoplasm. Functionally, participates in the apoptotic response to DNA damage. Isoforms containing the transactivation domain are pro-apoptotic, isoforms lacking the domain are anti-apoptotic and block the function of p53 and transactivating p73 isoforms. May be a tumor suppressor protein. Is an activator of FOXJ1 expression. It is an essential factor for the positive regulation of lung ciliated cell differentiation. This chain is Tumor protein p73 (TP73), found in Homo sapiens (Human).